We begin with the raw amino-acid sequence, 150 residues long: UPF0260 protein PP_4587 (150 aa).

It belongs to the UPF0260 family.

This chain is UPF0260 protein PP_4587, found in Pseudomonas putida (strain ATCC 47054 / DSM 6125 / CFBP 8728 / NCIMB 11950 / KT2440).